The following is a 377-amino-acid chain: Lactosylceramide 1,3-N-acetyl-beta-D-glucosaminyltransferase (377 aa).

The Cytoplasmic segment spans residues 1 to 14 (MRVFVSSRRVKRWQ). The helical; Signal-anchor for type II membrane protein transmembrane segment at 15-35 (FFHLFAICFILSFMVFWGPIN) threads the bilayer. The Lumenal segment spans residues 36–377 (NYIMSHMKSY…NSYPCRAAFA (342 aa)). An N-linked (GlcNAc...) asparagine glycan is attached at asparagine 58.

It belongs to the glycosyltransferase 31 family.

It localises to the golgi apparatus membrane. The enzyme catalyses a beta-D-Gal-(1-&gt;4)-beta-D-Glc-(1&lt;-&gt;1)-Cer(d18:1(4E)) + UDP-N-acetyl-alpha-D-glucosamine = a beta-D-GlcNAc-(1-&gt;3)-beta-D-Gal-(1-&gt;4)-beta-D-Glc-(1&lt;-&gt;1)-Cer(d18:1(4E)) + UDP + H(+). It catalyses the reaction a neolactoside nLc4Cer(d18:1(4E)) + UDP-N-acetyl-alpha-D-glucosamine = a neolactoside IV(3)-beta-GlcNAc-nLc4Cer(d18:1(4E)) + UDP + H(+). Its pathway is protein modification; protein glycosylation. Functionally, beta-1,3-N-acetylglucosaminyltransferase that plays a key role in the synthesis of lacto- or neolacto-series carbohydrate chains on glycolipids, notably by participating in biosynthesis of HNK-1 and Lewis X carbohydrate structures. Has strong activity toward lactosylceramide (LacCer) and neolactotetraosylceramide (nLc(4)Cer; paragloboside), resulting in the synthesis of Lc(3)Cer and neolactopentaosylceramide (nLc(5)Cer), respectively. Probably plays a central role in regulating neolacto-series glycolipid synthesis during embryonic development. In Rattus norvegicus (Rat), this protein is Lactosylceramide 1,3-N-acetyl-beta-D-glucosaminyltransferase.